Here is a 145-residue protein sequence, read N- to C-terminus: SsrA-binding protein (145 aa).

Belongs to the SmpB family.

It localises to the cytoplasm. Required for rescue of stalled ribosomes mediated by trans-translation. Binds to transfer-messenger RNA (tmRNA), required for stable association of tmRNA with ribosomes. tmRNA and SmpB together mimic tRNA shape, replacing the anticodon stem-loop with SmpB. tmRNA is encoded by the ssrA gene; the 2 termini fold to resemble tRNA(Ala) and it encodes a 'tag peptide', a short internal open reading frame. During trans-translation Ala-aminoacylated tmRNA acts like a tRNA, entering the A-site of stalled ribosomes, displacing the stalled mRNA. The ribosome then switches to translate the ORF on the tmRNA; the nascent peptide is terminated with the 'tag peptide' encoded by the tmRNA and targeted for degradation. The ribosome is freed to recommence translation, which seems to be the essential function of trans-translation. This is SsrA-binding protein from Mycoplasma genitalium (strain ATCC 33530 / DSM 19775 / NCTC 10195 / G37) (Mycoplasmoides genitalium).